The sequence spans 358 residues: Chorismate synthase (358 aa).

Arginine 46 serves as a coordination point for NADP(+). Residues arginine 123–serine 125, asparagine 235–alanine 236, glycine 275, lysine 290–serine 294, and arginine 316 each bind FMN.

It belongs to the chorismate synthase family. As to quaternary structure, homotetramer. It depends on FMNH2 as a cofactor.

The enzyme catalyses 5-O-(1-carboxyvinyl)-3-phosphoshikimate = chorismate + phosphate. The protein operates within metabolic intermediate biosynthesis; chorismate biosynthesis; chorismate from D-erythrose 4-phosphate and phosphoenolpyruvate: step 7/7. Its function is as follows. Catalyzes the anti-1,4-elimination of the C-3 phosphate and the C-6 proR hydrogen from 5-enolpyruvylshikimate-3-phosphate (EPSP) to yield chorismate, which is the branch point compound that serves as the starting substrate for the three terminal pathways of aromatic amino acid biosynthesis. This reaction introduces a second double bond into the aromatic ring system. This chain is Chorismate synthase, found in Helicobacter hepaticus (strain ATCC 51449 / 3B1).